The primary structure comprises 103 residues: uncharacterized protein (103 aa).

3 helical membrane-spanning segments follow: residues 12–34 (GFSWGIALFCLPILLWPLALTIS), 49–66 (TLMSVFLWAYPFGLALIA), and 79–101 (FARGLLGLSAVAFYGMLFYVAGG).

It is found in the cell membrane. This is an uncharacterized protein from Pasteurella multocida (strain Pm70).